A 209-amino-acid polypeptide reads, in one-letter code: Protease (209 aa).

Active-site residues include His-55, Asp-72, and Cys-123.

The protein belongs to the peptidase C5 family. Interacts with protease cofactor pVI-C; this interaction is necessary for protease activation.

The protein localises to the virion. The protein resides in the host nucleus. The enzyme catalyses Cleaves proteins of the adenovirus and its host cell at two consensus sites: -Yaa-Xaa-Gly-Gly-|-Xaa- and -Yaa-Xaa-Gly-Xaa-|-Gly- (in which Yaa is Met, Ile or Leu, and Xaa is any amino acid).. With respect to regulation, requires DNA and protease cofactor for maximal activation. Inside nascent virions, becomes partially activated by binding to the viral DNA, allowing it to cleave the cofactor that binds to the protease and fully activates it. Actin, like the viral protease cofactor, seems to act as a cofactor in the cleavage of cytokeratin 18 and of actin itself. Its function is as follows. Cleaves viral precursor proteins (pTP, pIIIa, pVI, pVII, pVIII, and pX) inside newly assembled particles giving rise to mature virions. Protease complexed to its cofactor slides along the viral DNA to specifically locate and cleave the viral precursors. Mature virions have a weakened organization compared to the unmature virions, thereby facilitating subsequent uncoating. Without maturation, the particle lacks infectivity and is unable to uncoat. Late in adenovirus infection, in the cytoplasm, may participate in the cytoskeleton destruction. Cleaves host cell cytoskeletal keratins K7 and K18. In Human adenovirus D serotype 17 (HAdV-17), this protein is Protease.